A 462-amino-acid polypeptide reads, in one-letter code: CD-NTase-associated protein 4 (462 aa).

An N-terminal endonuclease domain region spans residues 1 to 226 (MSASLLEKQS…FENFICHALE (226 aa)). Catalysis depends on residues Asp50, Glu67, and Lys69. Asp50 lines the Mg(2+) pocket. The interval 235–462 (DPIKINLSAS…QYIPTAELNL (228 aa)) is C-terminal SAVED domain. 2',3',3'-c-tri-AMP is bound by residues 299–301 (KQR), Trp449, and Tyr454.

This sequence belongs to the Cap4 nuclease family. A monomer in the absence of ligand, in its presence it forms oligomers. The cofactor is a divalent metal cation.

Its activity is regulated as follows. DNase activity is activated upon ligand binding. Inhibited by EDTA. Its function is as follows. Effector DNase of a CBASS antivirus system. CBASS (cyclic oligonucleotide-based antiphage signaling system) provides immunity against bacteriophage. The CD-NTase protein synthesizes cyclic nucleotides in response to infection; these serve as specific second messenger signals. The signals activate a diverse range of effectors, leading to bacterial cell death and thus abortive phage infection. A type II-C(AAAA) CBASS system. Functionally, binds cyclic nucleotide second messengers (synthesized by CdnD, the cognate CD-NTase in the CBASS operon). Ligand binding activates it to endonucleolytically degrade dsDNA to approximately 6 bp length fragments, with a preference for 5'-C or 5'-G cleavage site. The minor product of CdnD is the activating nucleotide; also binds the major product (2',3',3'-cyclic AMP-AMP-AMP) but is not activated by it. Only binds DNA in the presence of ligand. Is not activated by c-di-AMP, c-di-GMP, 3'3'-cyclic GMP-AMP (3'3'-cGAMP) or 3',3',3'-cyclic AMP-AMP-GMP. The protein is CD-NTase-associated protein 4 of Acinetobacter sp. (strain ATCC 27244 / 9458).